We begin with the raw amino-acid sequence, 406 residues long: Putative nickel insertion protein (406 aa).

Belongs to the LarC family.

The polypeptide is Putative nickel insertion protein (Methanosphaera stadtmanae (strain ATCC 43021 / DSM 3091 / JCM 11832 / MCB-3)).